Reading from the N-terminus, the 185-residue chain is piRNA-mediated silencing protein C19orf84 homolog (185 aa).

Disordered regions lie at residues 1–38 (MDEL…PSLL) and 93–185 (HIWP…EADY). Residues 11–25 (NGDNLSLPSAGTESW) show a composition bias toward polar residues. Low complexity predominate over residues 26–38 (PTSATPGLPPSLL). A compositionally biased stretch (basic residues) spans 118 to 130 (RPSRGWGRGRGRG). A compositionally biased stretch (basic and acidic residues) spans 139–150 (GPERAEERERNM).

As to quaternary structure, interacts with SPOCD1.

The protein resides in the nucleus. It is found in the nucleoplasm. Functionally, protein adapter involved in piRNA-directed transposon methylation by connecting PIWIL4-piRNA and DNA methylation machineries. The PIWIL4-piRNA pathway plays a central role during spermatogenesis by directing transposon DNA methylation and silencing, thereby preventing their mobilization, which is essential for the germline integrity. The protein is piRNA-mediated silencing protein C19orf84 homolog of Mus musculus (Mouse).